A 203-amino-acid polypeptide reads, in one-letter code: Hydra actinoporin-like toxin 2 (203 aa).

Positions 1 to 21 are cleaved as a signal peptide; that stretch reads MLSYLCFGCFLVSASLEIACG. The short motif at 175-177 is the Cell attachment site element; that stretch reads RGG.

The protein belongs to the actinoporin family. HALT subfamily. In terms of assembly, octamer or nonamer in membranes. Monomer in the soluble state. In vitro, interacts with folate receptor alpha (of target organism). In terms of tissue distribution, strongly expressed in the gland and mucous cells in the endoderm.

It is found in the nematocyst. It localises to the secreted. The protein localises to the target cell membrane. In terms of biological role, pore-forming protein that forms hydrophilic pores and causes cytolysis. Compared to equinatoxin-2 (AC P61914), it reveals lower cytolysis activity (5-12-fold difference, tested on erythrocytes), a larger pore size (probably 2-3 nm) and different affinity to membrane lipids (100-fold lower affinity to sphingomyelin). Binds to sulfatides (SFT). Shows cytolytic activity on HeLa cells, with a different potency than its paralogs (from most potent to less potent: HALT-4&gt;HALT-6~HALT-1&gt;HALT-3&gt;HALT-7&gt;HALT-2). Pore formation is a multi-step process that involves specific recognition of membrane lipid by a protein aromatic residues rich region, firm binding to the membrane (mainly driven by hydrophobic interactions) accompanied by the transfer of the N-terminal region to the lipid-water interface and finally pore formation after oligomerization of monomers. In vitro, binds to the folate receptor alpha (FOLR1), a GPI-anchored membrane protein that plays a major role in the uptake of folate/folic acid into cells via endocytosis, suggesting a possible involvement of this receptor in the mechanism of HALT-1-induced cell lysis. In vivo, does not cause visible paralysis in larvae of the blowfly Sarcophaga faculata, the most common arthropod prey of Hydra. The polypeptide is Hydra actinoporin-like toxin 2 (Hydra vulgaris (Hydra)).